Consider the following 318-residue polypeptide: L-carnitine dehydrogenase (318 aa).

14-19 (GAGVIG) is a binding site for NAD(+).

This sequence belongs to the 3-hydroxyacyl-CoA dehydrogenase family. L-carnitine dehydrogenase subfamily. As to quaternary structure, homodimer.

The protein resides in the cytoplasm. The catalysed reaction is carnitine + NAD(+) = 3-dehydrocarnitine + NADH + H(+). The protein operates within amine and polyamine metabolism; carnitine metabolism. Catalyzes the NAD(+)-dependent oxidation of L-carnitine to 3-dehydrocarnitine. This Streptomyces coelicolor (strain ATCC BAA-471 / A3(2) / M145) protein is L-carnitine dehydrogenase.